The chain runs to 342 residues: Dihydroorotase (342 aa).

Zn(2+) is bound by residues His13 and His15. Substrate is bound by residues 15-17 (HLR) and Asn41. Lys98, His135, and His173 together coordinate Zn(2+). Lys98 bears the N6-carboxylysine mark. Residue His135 participates in substrate binding. Residue Leu218 participates in substrate binding. Residue Asp246 coordinates Zn(2+). Asp246 is an active-site residue. Residues His250 and Ala262 each contribute to the substrate site.

The protein belongs to the metallo-dependent hydrolases superfamily. DHOase family. Class II DHOase subfamily. In terms of assembly, homodimer. The cofactor is Zn(2+).

It catalyses the reaction (S)-dihydroorotate + H2O = N-carbamoyl-L-aspartate + H(+). Its pathway is pyrimidine metabolism; UMP biosynthesis via de novo pathway; (S)-dihydroorotate from bicarbonate: step 3/3. Functionally, catalyzes the reversible cyclization of carbamoyl aspartate to dihydroorotate. The sequence is that of Dihydroorotase from Aliivibrio salmonicida (strain LFI1238) (Vibrio salmonicida (strain LFI1238)).